A 454-amino-acid chain; its full sequence is tRNA modification GTPase MnmE (454 aa).

Positions 26, 84, and 123 each coordinate (6S)-5-formyl-5,6,7,8-tetrahydrofolate. The TrmE-type G domain occupies 219–378 (GLQVVIAGKP…LVDAITAHAG (160 aa)). A K(+)-binding site is contributed by asparagine 229. Residues 229–234 (NAGKSS), 248–254 (TDIAGTT), and 273–276 (DTAG) each bind GTP. Serine 233 contributes to the Mg(2+) binding site. K(+) is bound by residues threonine 248, isoleucine 250, and threonine 253. Threonine 254 lines the Mg(2+) pocket. Lysine 454 contacts (6S)-5-formyl-5,6,7,8-tetrahydrofolate.

The protein belongs to the TRAFAC class TrmE-Era-EngA-EngB-Septin-like GTPase superfamily. TrmE GTPase family. Homodimer. Heterotetramer of two MnmE and two MnmG subunits. Requires K(+) as cofactor.

The protein localises to the cytoplasm. In terms of biological role, exhibits a very high intrinsic GTPase hydrolysis rate. Involved in the addition of a carboxymethylaminomethyl (cmnm) group at the wobble position (U34) of certain tRNAs, forming tRNA-cmnm(5)s(2)U34. The sequence is that of tRNA modification GTPase MnmE from Acinetobacter baumannii (strain ATCC 17978 / DSM 105126 / CIP 53.77 / LMG 1025 / NCDC KC755 / 5377).